Reading from the N-terminus, the 393-residue chain is Na(+)/H(+) antiporter NhaA (393 aa).

11 helical membrane passes run 18–38 (AGGVLLALSALVALVISNSPW), 65–85 (MLIWINDLWMAVFFFLVGLEI), 101–121 (MLPAVAALGGMAVPALIYAAI), 131–151 (GWGIPMATDIAFALGLLVLLG), 160–180 (VFLTAVAIIDDLGAILVIAFF), 184–204 (NLSPTMLLAAGLGALVLLGLN), 210–230 (AVGPYVVVGLVIWVCVLKSGI), 260–280 (ALQPWVAFLVLPVFAFANAGV), 298–318 (IAFGLLIGKPIGVFGASWLLI), 334–354 (FFGVCVLCGVGFTMSLFIGSL), and 369–389 (IGVLLGSLLSGAAGVALLLAS).

This sequence belongs to the NhaA Na(+)/H(+) (TC 2.A.33) antiporter family.

It is found in the cell inner membrane. The enzyme catalyses Na(+)(in) + 2 H(+)(out) = Na(+)(out) + 2 H(+)(in). Na(+)/H(+) antiporter that extrudes sodium in exchange for external protons. The protein is Na(+)/H(+) antiporter NhaA of Albidiferax ferrireducens (strain ATCC BAA-621 / DSM 15236 / T118) (Rhodoferax ferrireducens).